We begin with the raw amino-acid sequence, 417 residues long: 3-isopropylmalate dehydratase large subunit (417 aa).

[4Fe-4S] cluster is bound by residues Cys298, Cys358, and Cys361.

It belongs to the aconitase/IPM isomerase family. LeuC type 2 subfamily. In terms of assembly, heterodimer of LeuC and LeuD. The cofactor is [4Fe-4S] cluster.

The catalysed reaction is (2R,3S)-3-isopropylmalate = (2S)-2-isopropylmalate. The protein operates within amino-acid biosynthesis; L-leucine biosynthesis; L-leucine from 3-methyl-2-oxobutanoate: step 2/4. In terms of biological role, catalyzes the isomerization between 2-isopropylmalate and 3-isopropylmalate, via the formation of 2-isopropylmaleate. In Thermoanaerobacter pseudethanolicus (strain ATCC 33223 / 39E) (Clostridium thermohydrosulfuricum), this protein is 3-isopropylmalate dehydratase large subunit.